We begin with the raw amino-acid sequence, 204 residues long: UPF0637 protein SAB0972c (204 aa).

Belongs to the UPF0637 family.

This Staphylococcus aureus (strain bovine RF122 / ET3-1) protein is UPF0637 protein SAB0972c.